Reading from the N-terminus, the 330-residue chain is Ferredoxin--NADP reductase (330 aa).

Residues T19, D38, Q46, Y51, A91, F129, D286, and S327 each coordinate FAD.

The protein belongs to the ferredoxin--NADP reductase type 2 family. Homodimer. Requires FAD as cofactor.

The catalysed reaction is 2 reduced [2Fe-2S]-[ferredoxin] + NADP(+) + H(+) = 2 oxidized [2Fe-2S]-[ferredoxin] + NADPH. The polypeptide is Ferredoxin--NADP reductase (Nocardioides sp. (strain ATCC BAA-499 / JS614)).